The sequence spans 662 residues: Forkhead box protein O1 (662 aa).

Disordered regions lie at residues 1-62 (MAEA…PSAS) and 122-165 (GCLH…SRRN). Thr-24 bears the Phosphothreonine; by PKB/AKT1 or PKB/AKT2 and SGK1 mark. The segment covering 33–62 (SQSNSATSSPAPSGGAAANPDAAAGLPSAS) has biased composition (low complexity). A compositionally biased stretch (pro residues) spans 126-146 (PAPPQQPPPPGPLSQHPPVPP). Residues 167–261 (WGNLSYADLI…KSGKSPRRRA (95 aa)) constitute a DNA-binding region (fork-head). DNA-binding stretches follow at residues 218 to 225 (NSIRHNLS) and 241 to 244 (SSWW). Ser-219 is subject to Phosphoserine; by STK4/MST1. A phosphoserine mark is found at Ser-225, Ser-241, and Ser-242. A disordered region spans residues 241 to 342 (SSWWMLNPEG…GRLSPIMTEQ (102 aa)). Lys-252 and Lys-255 each carry N6-acetyllysine. Ser-256 is modified (phosphoserine; by CDK1). Omega-N-methylarginine; by PRMT1 is present on residues Arg-258 and Arg-260. Residues 258–260 (RRR) carry the Nuclear localization signal motif. A Phosphoserine; by PKB/AKT1 and SGK1 modification is found at Ser-263. N6-acetyllysine is present on residues Lys-269, Lys-272, and Lys-281. Residues 271–282 (AKSRGRAAKKKA) are compositionally biased toward basic residues. Residues 290-570 (GAGDSPGSQF…RLTQEKTALQ (281 aa)) form a sufficient for interaction with NLK region. Phosphoserine is present on residues Ser-294 and Ser-305. A compositionally biased stretch (polar residues) spans 316-333 (NWSTFRPRTSSNASTISG). Ser-326 is subject to Phosphoserine; by PKB/AKT1. Ser-329 carries the phosphoserine; by CK1 and SGK1 modification. A Phosphoserine; by CK1 modification is found at Ser-332. Ser-336 carries the post-translational modification Phosphoserine; by DYRK1A. A Phosphothreonine modification is found at Thr-340. A required for interaction with RUNX2 region spans residues 370–466 (SEISNPENME…GGMAQYNCAA (97 aa)). Position 430 is an N6-acetyllysine (Lys-430). The Required for interaction with SIRT1 signature appears at 469-473 (LKELL).

Interacts with LRPPRC. Interacts with RUNX2; the interaction inhibits RUNX2 transcriptional activity and mediates the IGF1/insulin-dependent BGLAP expression in osteoblasts Interacts with PPP2R1A; the interaction regulates the dephosphorylation of FOXO1 at Thr-24 and Ser-263 leading to its nuclear import. Interacts with NLK. Interacts with SIRT1; the interaction results in the deacetylation of FOXO1 leading to activation of FOXO1-mediated transcription of genes involved in DNA repair and stress resistance. Binds to CDK1. Interacts with the 14-3-3 proteins, YWHAG and YWHAZ; the interactions require insulin-stimulated phosphorylation on Thr-24, promote nuclear exit and loss of transcriptional activity. Interacts with SKP2; the interaction ubiquitinates FOXO1 leading to its proteasomal degradation. The interaction requires the presence of KRIT1. Interacts (via the C-terminal half) with ATF4 (via its DNA binding domain); the interaction occurs in osteoblasts, regulates glucose homeostasis via suppression of beta-cell proliferation and subsequent decrease in insulin production. Interacts with PRMT1; the interaction methylates FOXO1, prevents PKB/AKT1 phosphorylation and retains FOXO1 in the nucleus. Interacts with EP300 and CREBBP; the interactions acetylate FOXO1. Interacts with SIRT2; the interaction is disrupted in response to oxidative stress or serum deprivation, leading to increased level of acetylated FOXO1, which promotes stress-induced autophagy by stimulating E1-like activating enzyme ATG7. Interacts (acetylated form) with ATG7; the interaction is increased in response to oxidative stress or serum deprivation and promotes the autophagic process leading to cell death. Interacts (acetylated form) with PPARG. Interacts with XBP1; this interaction is direct and leads to FOXO1 ubiquitination and degradation via the proteasome pathway. Interacts (via the Fork-head domain) with CEBPA; the interaction increases when FOXO1 is deacetylated. Interacts with WDFY2. Forms a complex with WDFY2 and AKT1. Interacts with CRY1. Interacts with PPIA/CYPA; the interaction promotes FOXO1 dephosphorylation, nuclear accumulation and transcriptional activity. Interacts with TOX4; FOXO1 is required for full induction of TOX4-dependent activity and the interaction is inhibited by insulin. Interacts (when phosphorylated on Ser-263) with STUB1/CHIP. In terms of processing, phosphorylation by NLK promotes nuclear export and inhibits the transcriptional activity. In response to growth factors, phosphorylation on Thr-24, Ser-263 and Ser-326 by PKB/AKT1 promotes nuclear export and inactivation of transactivational activity. Phosphorylation on Thr-24 is required for binding 14-3-3 proteins. Phosphorylation of Ser-263 decreases DNA-binding activity and promotes the phosphorylation of Thr-24 and Ser-326, permitting phosphorylation of Ser-329 and Ser-332, probably by CDK1, leading to nuclear exclusion and loss of function. Stress signals, such as response to oxygen or nitric oxide, attenuate the PKB/AKT1-mediated phosphorylation leading to nuclear retention. Phosphorylation of Ser-336 is independent of IGF1 and leads to reduced function. Dephosphorylated on Thr-24 and Ser-263 by PP2A in beta-cells under oxidative stress leading to nuclear retention. Phosphorylation of Ser-256 by CDK1 disrupts binding of 14-3-3 proteins leading to nuclear accumulation and has no effect on DNA binding nor transcriptional activity. Phosphorylation by STK4/MST1 on Ser-219, upon oxidative stress, inhibits binding to 14-3-3 proteins and nuclear export. PPIA/CYPA promotes its dephosphorylation on Ser-263. Post-translationally, ubiquitinated by SKP2. Ubiquitination leads to proteasomal degradation. Ubiquitinated by STUB1/CHIP; when Ser-263 is phosphorylated. Methylation inhibits AKT1-mediated phosphorylation at Ser-263 and is increased by oxidative stress. In terms of processing, acetylated. Acetylation at Lys-269 and Lys-281 are necessary for autophagic cell death induction. Deacetylated by SIRT2 in response to oxidative stress or serum deprivation, thereby negatively regulating FOXO1-mediated autophagic cell death. Once in the nucleus, acetylated by CREBBP/EP300. Acetylation diminishes the interaction with target DNA and attenuates the transcriptional activity. It increases the phosphorylation at Ser-263. Deacetylation by SIRT1 results in reactivation of the transcriptional activity. Oxidative stress by hydrogen peroxide treatment appears to promote deacetylation and uncoupling of insulin-induced phosphorylation. By contrast, resveratrol acts independently of acetylation. Acetylated at Lys-430, promoting its localization to the nucleus and transcription factor activity. Deacetylation at Lys-430 by SIRT6, promotes its translocation into the cytoplasm, preventing its transcription factor activity. Deacetylation and subsequent inhibition by SIRT6 has different effects depending on cell types: it inhibits gluconeogenesis in hepatocytes, promotes glucose sensing in pancreatic beta-cells and regulates lipid catabolism in brown adipocytes. As to expression, highly in subcutaneous adipose and visceral adipose tissues. Levels higher in piglets than in adults. Also expressed at lower levels in liver and muscle.

It localises to the cytoplasm. The protein localises to the nucleus. Its function is as follows. Transcription factor that is the main target of insulin signaling and regulates metabolic homeostasis in response to oxidative stress. Binds to the insulin response element (IRE) with consensus sequence 5'-TT[G/A]TTTTG-3' and the related Daf-16 family binding element (DBE) with consensus sequence 5'-TT[G/A]TTTAC-3'. Activity suppressed by insulin. Main regulator of redox balance and osteoblast numbers and controls bone mass. Orchestrates the endocrine function of the skeleton in regulating glucose metabolism. Also acts as a key regulator of chondrogenic commitment of skeletal progenitor cells in response to lipid availability: when lipids levels are low, translocates to the nucleus and promotes expression of SOX9, which induces chondrogenic commitment and suppresses fatty acid oxidation. Acts synergistically with ATF4 to suppress osteocalcin/BGLAP activity, increasing glucose levels and triggering glucose intolerance and insulin insensitivity. Also suppresses the transcriptional activity of RUNX2, an upstream activator of osteocalcin/BGLAP. Acts as an inhibitor of glucose sensing in pancreatic beta cells by acting as a transcription repressor and suppressing expression of PDX1. In hepatocytes, promotes gluconeogenesis by acting together with PPARGC1A and CEBPA to activate the expression of genes such as IGFBP1, G6PC1 and PCK1. Also promotes gluconeogenesis by directly promoting expression of PPARGC1A and G6PC1. Important regulator of cell death acting downstream of CDK1, PKB/AKT1 and STK4/MST1. Promotes neural cell death. Mediates insulin action on adipose tissue. Regulates the expression of adipogenic genes such as PPARG during preadipocyte differentiation and, adipocyte size and adipose tissue-specific gene expression in response to excessive calorie intake. Regulates the transcriptional activity of GADD45A and repair of nitric oxide-damaged DNA in beta-cells. Required for the autophagic cell death induction in response to starvation or oxidative stress in a transcription-independent manner. Mediates the function of MLIP in cardiomyocytes hypertrophy and cardiac remodeling. Positive regulator of apoptosis in cardiac smooth muscle cells as a result of its transcriptional activation of pro-apoptotic genes. Regulates endothelial cell (EC) viability and apoptosis in a PPIA/CYPA-dependent manner via transcription of CCL2 and BCL2L11 which are involved in EC chemotaxis and apoptosis. The chain is Forkhead box protein O1 (FOXO1) from Sus scrofa (Pig).